We begin with the raw amino-acid sequence, 381 residues long: DNA replication and repair protein RecF (381 aa).

30–37 provides a ligand contact to ATP; the sequence is GENAQGKT.

It belongs to the RecF family.

The protein resides in the cytoplasm. Its function is as follows. The RecF protein is involved in DNA metabolism; it is required for DNA replication and normal SOS inducibility. RecF binds preferentially to single-stranded, linear DNA. It also seems to bind ATP. In Lactobacillus delbrueckii subsp. bulgaricus (strain ATCC 11842 / DSM 20081 / BCRC 10696 / JCM 1002 / NBRC 13953 / NCIMB 11778 / NCTC 12712 / WDCM 00102 / Lb 14), this protein is DNA replication and repair protein RecF.